Consider the following 809-residue polypeptide: Phenylalanine--tRNA ligase beta subunit (809 aa).

In terms of domain architecture, tRNA-binding spans 39–153 (APPFSQIVVG…EDTPVGADIR (115 aa)). One can recognise a B5 domain in the interval 404-479 (PKREPVRMRV…RIYGFEQIPA (76 aa)). Mg(2+) is bound by residues D457, D463, E466, and E467. The region spanning 706–808 (PRVPAVTRDI…AGDAFGARLR (103 aa)) is the FDX-ACB domain.

Belongs to the phenylalanyl-tRNA synthetase beta subunit family. Type 1 subfamily. Tetramer of two alpha and two beta subunits. Mg(2+) serves as cofactor.

Its subcellular location is the cytoplasm. The enzyme catalyses tRNA(Phe) + L-phenylalanine + ATP = L-phenylalanyl-tRNA(Phe) + AMP + diphosphate + H(+). The polypeptide is Phenylalanine--tRNA ligase beta subunit (Ralstonia nicotianae (strain ATCC BAA-1114 / GMI1000) (Ralstonia solanacearum)).